Reading from the N-terminus, the 200-residue chain is MIVLGLTGSIGMGKTTAAGMFAEAGVPVYSADDAVHRLYSGRAAPLIEATFPGTVENGIVNREKLFKAVIGQPEAIKKLEAVVHPLVREEEDAFRREAEKSGAAIALVDIPLLFETGAEKRVDKVVVVSAPADIQHTRVLARPGMTQEKLKAILVRQIPDAEKRSRADFVLDTSGSFDDLRRQIAEIITGLSGKPAAATR.

Residues 3–200 enclose the DPCK domain; the sequence is VLGLTGSIGM…LSGKPAAATR (198 aa). 11–16 contacts ATP; the sequence is GMGKTT.

Belongs to the CoaE family.

The protein localises to the cytoplasm. The enzyme catalyses 3'-dephospho-CoA + ATP = ADP + CoA + H(+). The protein operates within cofactor biosynthesis; coenzyme A biosynthesis; CoA from (R)-pantothenate: step 5/5. Catalyzes the phosphorylation of the 3'-hydroxyl group of dephosphocoenzyme A to form coenzyme A. The chain is Dephospho-CoA kinase from Brucella melitensis biotype 1 (strain ATCC 23456 / CCUG 17765 / NCTC 10094 / 16M).